The following is a 336-amino-acid chain: Protein-glutamate methylesterase/protein-glutamine glutaminase 3 (336 aa).

The 118-residue stretch at lysine 2–leucine 119 folds into the Response regulatory domain. Residue aspartate 53 is modified to 4-aspartylphosphate. The 190-residue stretch at proline 147 to glutamine 336 folds into the CheB-type methylesterase domain. Catalysis depends on residues serine 159, histidine 186, and aspartate 279.

The protein belongs to the CheB family. Post-translationally, phosphorylated by CheA. Phosphorylation of the N-terminal regulatory domain activates the methylesterase activity.

It is found in the cytoplasm. It catalyses the reaction [protein]-L-glutamate 5-O-methyl ester + H2O = L-glutamyl-[protein] + methanol + H(+). It carries out the reaction L-glutaminyl-[protein] + H2O = L-glutamyl-[protein] + NH4(+). Involved in chemotaxis. Part of a chemotaxis signal transduction system that modulates chemotaxis in response to various stimuli. Catalyzes the demethylation of specific methylglutamate residues introduced into the chemoreceptors (methyl-accepting chemotaxis proteins or MCP) by CheR. Also mediates the irreversible deamidation of specific glutamine residues to glutamic acid. This Pseudomonas savastanoi pv. phaseolicola (strain 1448A / Race 6) (Pseudomonas syringae pv. phaseolicola (strain 1448A / Race 6)) protein is Protein-glutamate methylesterase/protein-glutamine glutaminase 3.